A 149-amino-acid polypeptide reads, in one-letter code: Calmodulin-like protein (149 aa).

EF-hand domains follow at residues 6–41, 42–76, 78–113, and 113–148; these read TTQA…VGSN, PTQQ…KMKY, DSEA…IGEK, and KLTK…SKSF. Ca(2+) contacts are provided by Asp-19, Asp-21, Asp-23, Lys-25, and Glu-30.

It belongs to the calmodulin family.

It is found in the contractile vacuole. Its function is as follows. Mediates the control of a large number of enzymes, ion channels and other proteins by Ca(2+) ions. Among the enzymes to be stimulated by the calmodulin-Ca(2+) complex are a number of protein kinases and phosphatases. In Dictyostelium discoideum (Social amoeba), this protein is Calmodulin-like protein (calB).